Consider the following 305-residue polypeptide: Coiled-coil domain-containing protein 69-A (305 aa).

Gly-2 carries N-myristoyl glycine lipidation. A disordered region spans residues 13 to 38 (LRKKKRQKAHQGGLTSQELNDLNAKT). Residues 25 to 38 (GLTSQELNDLNAKT) show a composition bias toward polar residues. Residues 42-281 (NEVLQKIKEY…QREKEQNLYR (240 aa)) are a coiled coil.

Belongs to the CCDC69 family.

It localises to the cytoplasm. The protein resides in the cytoskeleton. The protein localises to the spindle. Its subcellular location is the midbody. Functionally, may act as a scaffold to regulate the recruitment and assembly of spindle midzone components. The chain is Coiled-coil domain-containing protein 69-A (ccdc69-a) from Xenopus laevis (African clawed frog).